A 51-amino-acid polypeptide reads, in one-letter code: Mating pheromone Er-23 (51 aa).

5 cysteine pairs are disulfide-bonded: cysteine 3–cysteine 24, cysteine 6–cysteine 16, cysteine 13–cysteine 47, cysteine 27–cysteine 40, and cysteine 35–cysteine 51.

Its subcellular location is the secreted. Mating ciliate pheromones (or gamones) are diffusible extracellular communication signals that distinguish different intraspecific classes of cells commonly referred to as 'mating types'. They prepare the latter for conjugation by changing their cell surface properties. The sequence is that of Mating pheromone Er-23 (MAT23) from Euplotes raikovi.